Here is a 296-residue protein sequence, read N- to C-terminus: F-box only protein 2 (296 aa).

The interval 1 to 41 is disordered; the sequence is MDGDGDPESVGQPEEASPEEQPEEASAEEERPEDQQEEEAA. Over residues 16-40 the composition is skewed to acidic residues; sequence ASPEEQPEEASAEEERPEDQQEEEA. The F-box domain maps to 44-91; it reads AAYLDELPEPLLLRVLAALPAAELVQACRLVCLRWKELVDGAPLWLLK. Residues 113–296 form the FBA domain; it reads FYFLSKRRRN…VTNSSVWVEP (184 aa). A carbohydrate is bound by residues 210–212 and 278–279; these read RSD and YW.

In terms of assembly, component of the SCF(FBXO2) complex consisting of CUL1, RBX1, SKP1 and FBXO2. Predominantly detected as heterodimer with SKP1; the heterodimer with SKP1 is not part of the SCF(FBXO2) complex.

The protein resides in the cytoplasm. It localises to the microsome membrane. It participates in protein modification; protein ubiquitination. In terms of biological role, substrate recognition component of a SCF (SKP1-CUL1-F-box protein) E3 ubiquitin-protein ligase complex that mediates the ubiquitination and subsequent proteasomal degradation of target proteins. Involved in the endoplasmic reticulum-associated degradation pathway (ERAD) for misfolded lumenal proteins by recognizing and binding sugar chains on unfolded glycoproteins that are retrotranslocated into the cytosol and promoting their ubiquitination and subsequent degradation. Prevents formation of cytosolic aggregates of unfolded glycoproteins that have been retrotranslocated into the cytosol. Able to recognize and bind denatured glycoproteins, preferentially those of the high-mannose type. This is F-box only protein 2 (FBXO2) from Homo sapiens (Human).